The sequence spans 502 residues: Capsid protein (502 aa).

Disordered stretches follow at residues 369–392 (ISEL…SDYD) and 405–487 (LTDS…TRKQ). Positions 447-456 (SRRRKRRRRS) are enriched in basic residues.

Belongs to the anelloviridae capsid protein family.

Its subcellular location is the virion. Its function is as follows. Self-assembles to form an icosahedral capsid with a T=1 symmetry, about 30 nm in diameter, and consisting of 60 capsid proteins. The capsid encapsulates the genomic DNA. Capsid protein is involved in attachment and entry into the host cell. The protein is Capsid protein of Tupaia.